The chain runs to 158 residues: Ankyrin repeat domain-containing protein 37 (158 aa).

ANK repeat units follow at residues Met-1 to Ala-25, Cys-30 to Gln-59, and Leu-63 to Leu-92. The Nuclear localization signal motif lies at Glu-129–Val-149.

Post-translationally, ubiquitinated by the CRL2(FEM1B) complex, leading to its degradation. In terms of tissue distribution, mainly expressed in testis, small intestine, colon, blood leukocytes and in pancreatic adenocarcinoma cells.

Its subcellular location is the nucleus. The protein localises to the cytoplasm. The chain is Ankyrin repeat domain-containing protein 37 from Homo sapiens (Human).